We begin with the raw amino-acid sequence, 556 residues long: Arginine--tRNA ligase (556 aa).

The 'HIGH' region signature appears at 132-142 (VNPTGDLHLGH).

It belongs to the class-I aminoacyl-tRNA synthetase family. In terms of assembly, monomer.

Its subcellular location is the cytoplasm. It catalyses the reaction tRNA(Arg) + L-arginine + ATP = L-arginyl-tRNA(Arg) + AMP + diphosphate. This is Arginine--tRNA ligase from Oceanobacillus iheyensis (strain DSM 14371 / CIP 107618 / JCM 11309 / KCTC 3954 / HTE831).